Consider the following 334-residue polypeptide: N-acetylmuramate/N-acetylglucosamine kinase (334 aa).

It belongs to the kinase AmgK family.

It catalyses the reaction N-acetyl-D-muramate + ATP = N-acetyl-alpha-D-muramate 1-phosphate + ADP + H(+). The enzyme catalyses N-acetyl-D-glucosamine + ATP = N-acetyl-alpha-D-glucosamine 1-phosphate + ADP + H(+). It participates in cell wall biogenesis; peptidoglycan recycling. In terms of biological role, sugar kinase that catalyzes the ATP-dependent phosphorylation of N-acetylmuramate (MurNAc) and N-acetylglucosamine (GlcNAc) at its C1 hydroxyl group, leading to MurNAc alpha-1P and GlcNAc alpha-1P, respectively. Is likely involved in peptidoglycan recycling as part of a cell wall recycling pathway that bypasses de novo biosynthesis of the peptidoglycan precursor UDP-MurNAc. Is able to complement the fosfomycin sensitivity phenotype of a P.putida mutant lacking amgK. The sequence is that of N-acetylmuramate/N-acetylglucosamine kinase from Neisseria meningitidis serogroup B (strain ATCC BAA-335 / MC58).